A 280-amino-acid chain; its full sequence is Tryptophan synthase alpha chain (280 aa).

Catalysis depends on proton acceptor residues Glu-49 and Asp-60.

Belongs to the TrpA family. In terms of assembly, tetramer of two alpha and two beta chains.

It catalyses the reaction (1S,2R)-1-C-(indol-3-yl)glycerol 3-phosphate + L-serine = D-glyceraldehyde 3-phosphate + L-tryptophan + H2O. Its pathway is amino-acid biosynthesis; L-tryptophan biosynthesis; L-tryptophan from chorismate: step 5/5. Its function is as follows. The alpha subunit is responsible for the aldol cleavage of indoleglycerol phosphate to indole and glyceraldehyde 3-phosphate. The chain is Tryptophan synthase alpha chain from Corynebacterium efficiens (strain DSM 44549 / YS-314 / AJ 12310 / JCM 11189 / NBRC 100395).